Here is a 73-residue protein sequence, read N- to C-terminus: MQNKETLEQRIAELEMKTTFQEKLLDELNQVIVEQQFAIDKIHVQLRYLVNKFKDMQPSNIASQAEETPPPHY.

Belongs to the SlyX family.

This is Protein SlyX homolog from Pasteurella multocida (strain Pm70).